Reading from the N-terminus, the 792-residue chain is Carboxysome assembly protein CsoS2 (792 aa).

Residues 1–15 show a composition bias toward basic and acidic residues; the sequence is MAKQSSRELALERRK. The tract at residues 1–235 is N-terminal domain; it reads MAKQSSRELA…EISQRVRELR (235 aa). 3 disordered regions span residues 1 to 259, 280 to 299, and 338 to 359; these read MAKQ…RNGS, QVVTGTQANRSSKTTGNEAS, and HGNRVTGNEVGRSEKVTGDEPG. The N-repeat 1 repeat unit spans residues 7-22; sequence RELALERRKALSNSGK. Polar residues-rich tracts occupy residues 17-36 and 69-82; these read LSNSGKKSTTLNGSSPNRIR and DTSFVASRESSGAS. The N-repeat 2 repeat unit spans residues 94 to 109; the sequence is RELVLARRDELSRRGQ. 2 stretches are compositionally biased toward basic and acidic residues: residues 97 to 106 and 113 to 126; these read VLARRDELSR and KSKDRTRAEVEKIS. Residues 161–175 show a composition bias toward polar residues; the sequence is DTVSRLSSRNSTSRP. 2 N-repeat repeats span residues 187-202 and 225-240; these read RALVLARREAQSKHGK and REISQRVRELRSKSGA. Residues 218–236 are compositionally biased toward basic and acidic residues; the sequence is GDPDLSSREISQRVRELRS. The segment at 240-615 is middle region; that stretch reads ATGKKRSGAC…VQACGSDAPA (376 aa). M-repeat repeat units lie at residues 270–319, 330–379, 388–427, 441–490, 500–549, and 560–609; these read KVGL…DTFC, KVAV…NQYC, KVGQSVTEDGRKVSGVMVGRSEKVTGDEAGSNRQLTGDQY, KVGS…NTFC, KVGL…SGWC, and RTPK…VQAC. 2 disordered regions span residues 608-662 and 687-792; these read ACGS…GSQI and HFKS…GARG. The segment at 616-792 is C-terminal domain; the sequence is GSNDHQGSSE…LITVSGGARG (177 aa). Composition is skewed to polar residues over residues 618–636 and 651–662; these read NDHQGSSESSPWTHFSVQS and VTGTSYEQGSQI. C-repeat repeat units follow at residues 633–678 and 703–738; these read SVQS…GTEQ and TRPESRVTGEGQSAGLNITGDDWDRSERVTGTEGAS. Positions 763-792 are C-terminal peptide (CTP); the sequence is EVSQPMSRVTGSSGNTDQGSLITVSGGARG. Positions 764 to 785 are enriched in polar residues; sequence VSQPMSRVTGSSGNTDQGSLIT.

Belongs to the CsoS2 family. Probably interacts with the carboxysome major shell protein CsoS1 via the N-terminal domain; this complex probably also interacts with RuBisCO. Post-translationally, has been suggested to undergo ribosomal frameshifting, as does its ortholog in H.neapolitanus. The exact position of the putative frameshift is not given, but it would probably occur in the sixth M-repeat and remove the C-terminus.

It is found in the carboxysome. Its function is as follows. Required for alpha-carboxysome (Cb) assembly, mediates interaction between RuBisCO and the Cb shell. The protein is probably intrinsically disordered. The C-terminal repeats act as the encapsulation signal to target proteins to the Cb; they are necessary and sufficient to target both CsoS2 and foreign proteins to the Cb. The N-terminal repeats of this protein bind simultaneously to both subunits of RuBisCO. Probably also interacts with the major shell proteins (CsoS1); that interaction would increase the local concentration of CsoS2 so that it can condense RuBisCO and full carboxysomes can be formed. The sequence is that of Carboxysome assembly protein CsoS2 from Prochlorococcus marinus (strain MIT 9313).